Consider the following 431-residue polypeptide: Divergent protein kinase domain 1B (431 aa).

The Cytoplasmic portion of the chain corresponds to 1-30 (MRRLRRLVHLVLLCPFSKGLQGRLPGLRVK). A May mediate ER retention motif is present at residues 5-6 (RR). A helical membrane pass occupies residues 31 to 51 (YVLLVWLGIFVGSWMVYVHYS). The Lumenal portion of the chain corresponds to 52 to 431 (SYSELCRGHV…WREISNTNYS (380 aa)). 2 disulfide bridges follow: C57–C94 and C62–C117.

The protein belongs to the DIPK family. In terms of processing, among the many cysteines in the lumenal domain, most are probably involved in disulfide bonds. In terms of tissue distribution, expressed in kidney, testis, lung, heart, stomach, intestine, pancreas, liver and salivary gland. Strongly expressed in acute pancreatitis, brain, and in peripheral endothelial cells.

Its subcellular location is the endoplasmic reticulum membrane. In Mus musculus (Mouse), this protein is Divergent protein kinase domain 1B (Dipk1b).